The sequence spans 293 residues: Elongation factor Ts (293 aa).

An involved in Mg(2+) ion dislocation from EF-Tu region spans residues 80 to 83 (TDFV).

It belongs to the EF-Ts family.

It is found in the cytoplasm. Functionally, associates with the EF-Tu.GDP complex and induces the exchange of GDP to GTP. It remains bound to the aminoacyl-tRNA.EF-Tu.GTP complex up to the GTP hydrolysis stage on the ribosome. In Burkholderia cenocepacia (strain ATCC BAA-245 / DSM 16553 / LMG 16656 / NCTC 13227 / J2315 / CF5610) (Burkholderia cepacia (strain J2315)), this protein is Elongation factor Ts.